We begin with the raw amino-acid sequence, 1363 residues long: MEYLKLCFYLFFFYFVMEQIQQQQQQQQQQQQQQQQQQQQQQQQQQQQLQQQQQQQQQQQQQQQQQQQQQQQNPKMNNQPNETRLPSPPLLNSTVPKNELNINHHHQHNYKINSAPLKASQHANEYDHNEESLNSSNNNNNNNFNNSRPTFSSCSGNSNNTTTTTTTTTTTNPINGSVNSNVTTTSINTIHQKFITQLKQRLGKGIDYNNYINKLKNINNINNISKLINLSSQPDAIGKNNNLISNTGPVAEMYDDEEFDEFDEEEDDDISAQKLVGILSRESSSSNLSSIAPSPLLQQPNCLPSPFINGTPLLSNHSNNNNNNNNNHHHHHHHHHQKRLSIGSMDSTNHLTPLPLLHKHTNNNNNINNNNNHNHNNILGSPNQLNRSQDFTSKNNNINNNNNNNNKIINEENCNKGSPNQNSSENNSEEENEYHGGEEGNVYSVYDLNSPYFNERKQRALSNNKSQQPPQHVPTPCTYNDCCICAYGPPPSFFTSAPTWADICYIALYCLTLSRPEVKYYHIKKDICTFIDCHYETICMRKRTSIWRQTVNMTLSHPQYFEMFQQESALENGRKGYYGLKQIHDPYEHTALNKRSRRKRRHEQKMIQEELKKNGFTNLLLNSPSIENNDQHHNGYIQSYNNNSNHNNNNNNNNNNNNNNSNNNNNNNNNNSNNNNNNNINNNNINNNNNNNILTSPIQHHPHSHQQQHHQQQLQHQQHQQQQLLHQQHQQLLHQQHQQQLQIQYQQQQTHNNNLNQTQQLYYNHHHHQQQQQQQQQQQQHNNNNNNNNSNHNSVLTSPPLSQFPKTPLQLSQTPQHSLSALSSPFLKTLTIEDEDDSYNGQVHKKLRSAKLTSVNSINSNSGMSLPMISSPSPNLSHMQKNRPNFDDILNSSLSSSNTTNSATTSSSNSILSNSLSNISNSSGGSGGVCISEDYESNIQRRKSLNNIVLNKTNKNILPKLDDECDDEDDFHFTENEREVPVSNLKSSSFIINKNNIINQQNYNENNNNNNNNNNNNYNINNINNNNNNNFDDADDENEFENKDNINNNNNNNNNNNNNNNNNKNDKNESEFESKEKLNSPFGSSIPNIVNNEQLSPYSQQSLSSSSSENPSPQWSTNGPSQTSSSKLSNSTSTLINNNNNSMSIMSINSSGNSINNTTTYNNNNNFINNNSNNNNNMEIDDDDEDGIDGIEGEDDSKKRMRKTTRPDEKIYLEIYYQHFYENNGKHSKDELITLSNNLNWKVNRIQRWLDNRRTKDKLKNLRVSQERTISFGASSTSSTQTSTNSPSSQLSPLVPNMNNNDQQSISTPSLILSQINNNQNNNQNNNNNNNTNNADVTLISNNNVPNTPIMANTQSNINSLLN.

Residues 15–73 are a coiled coil; the sequence is FVMEQIQQQQQQQQQQQQQQQQQQQQQQQQQQQQLQQQQQQQQQQQQQQQQQQQQQQQN. 9 disordered regions span residues 66 to 96, 120 to 177, 308 to 437, 621 to 731, 765 to 818, 857 to 911, 1001 to 1137, 1166 to 1202, and 1270 to 1341; these read QQQQ…STVP, SQHA…INGS, INGT…YHGG, LNSP…QHQQ, HHHH…PQHS, SINS…SNSI, QNYN…TLIN, NFIN…KRMR, and ISFG…TLIS. Residues 73 to 96 are compositionally biased toward polar residues; that stretch reads NPKMNNQPNETRLPSPPLLNSTVP. A compositionally biased stretch (low complexity) spans 132–147; that stretch reads SLNSSNNNNNNNFNNS. Polar residues predominate over residues 148 to 158; sequence RPTFSSCSGNS. 2 stretches are compositionally biased toward low complexity: residues 159–177 and 315–326; these read NNTT…INGS and SNHSNNNNNNNN. The segment covering 327-339 has biased composition (basic residues); the sequence is NHHHHHHHHHQKR. Positions 348-378 are enriched in low complexity; the sequence is TNHLTPLPLLHKHTNNNNNINNNNNHNHNNI. Residues 379-393 show a composition bias toward polar residues; it reads LGSPNQLNRSQDFTS. Composition is skewed to low complexity over residues 394 to 408, 415 to 426, 641 to 693, 709 to 731, and 770 to 793; these read KNNN…NNKI, NKGSPNQNSSEN, NNNS…NNNI, HHQQ…QHQQ, and QQQQ…SNHN. Residues 738-789 are a coiled coil; that stretch reads QQQLQIQYQQQQTHNNNLNQTQQLYYNHHHHQQQQQQQQQQQQHNNNNNNNN. Composition is skewed to polar residues over residues 794-818 and 857-883; these read SVLT…PQHS and SINS…QKNR. Low complexity-rich tracts occupy residues 889–911, 1001–1031, and 1045–1063; these read ILNS…SNSI, QNYN…NNNF, and NINN…NNNN. Residues 1064 to 1078 show a composition bias toward basic and acidic residues; the sequence is KNDKNESEFESKEKL. Residues 1081-1095 are compositionally biased toward polar residues; that stretch reads PFGSSIPNIVNNEQL. Composition is skewed to low complexity over residues 1096-1116, 1123-1137, and 1166-1177; these read SPYS…PQWS, TSSS…TLIN, and NFINNNSNNNNN. Positions 1179–1195 are enriched in acidic residues; that stretch reads EIDDDDEDGIDGIEGED. Residues 1198 to 1261 constitute a DNA-binding region (homeobox); the sequence is KKRMRKTTRP…NRRTKDKLKN (64 aa). Positions 1275 to 1294 are enriched in low complexity; the sequence is SSTSSTQTSTNSPSSQLSPL. Polar residues predominate over residues 1297–1316; the sequence is NMNNNDQQSISTPSLILSQI. The segment covering 1317–1334 has biased composition (low complexity); it reads NNNQNNNQNNNNNNNTNN.

It is found in the nucleus. Putative transcription factor. This is Homeobox protein 13 (hbx13) from Dictyostelium discoideum (Social amoeba).